A 1215-amino-acid polypeptide reads, in one-letter code: Pesticidal crystal protein Cry1Ka (1215 aa).

The protein belongs to the delta endotoxin family.

In terms of biological role, promotes colloidosmotic lysis by binding to the midgut epithelial cells of insects. Selectively toxic to Artogeia rapae but not active on Plutella xylostella. This is Pesticidal crystal protein Cry1Ka (cry1Ka) from Bacillus thuringiensis subsp. morrisoni.